The sequence spans 102 residues: Citrate lyase acyl carrier protein (102 aa).

The residue at position 14 (Ser14) is an O-(phosphoribosyl dephospho-coenzyme A)serine.

It belongs to the CitD family. In terms of assembly, oligomer with a subunit composition of (alpha,beta,gamma)6.

The protein localises to the cytoplasm. Its function is as follows. Covalent carrier of the coenzyme of citrate lyase. The sequence is that of Citrate lyase acyl carrier protein from Streptococcus pyogenes serotype M4 (strain MGAS10750).